A 1351-amino-acid chain; its full sequence is uncharacterized protein (1351 aa).

Residues 1-17 (MSKKDSKNSPKKSKDTN) are compositionally biased toward basic and acidic residues. A disordered region spans residues 1–31 (MSKKDSKNSPKKSKDTNSDESSSSNAETSSD). Low complexity predominate over residues 19 to 31 (DESSSSNAETSSD).

This is an uncharacterized protein from Acanthamoeba polyphaga mimivirus (APMV).